Reading from the N-terminus, the 231-residue chain is ATP phosphoribosyltransferase (231 aa).

This sequence belongs to the ATP phosphoribosyltransferase family. Short subfamily. In terms of assembly, heteromultimer composed of HisG and HisZ subunits.

Its subcellular location is the cytoplasm. It carries out the reaction 1-(5-phospho-beta-D-ribosyl)-ATP + diphosphate = 5-phospho-alpha-D-ribose 1-diphosphate + ATP. It participates in amino-acid biosynthesis; L-histidine biosynthesis; L-histidine from 5-phospho-alpha-D-ribose 1-diphosphate: step 1/9. In terms of biological role, catalyzes the condensation of ATP and 5-phosphoribose 1-diphosphate to form N'-(5'-phosphoribosyl)-ATP (PR-ATP). Has a crucial role in the pathway because the rate of histidine biosynthesis seems to be controlled primarily by regulation of HisG enzymatic activity. The sequence is that of ATP phosphoribosyltransferase from Psychrobacter arcticus (strain DSM 17307 / VKM B-2377 / 273-4).